A 332-amino-acid polypeptide reads, in one-letter code: Adenosine deaminase (332 aa).

The Zn(2+) site is built by His-12 and His-14. Residues His-14, Asp-16, and Gly-170 each contribute to the substrate site. His-197 lines the Zn(2+) pocket. Glu-200 (proton donor) is an active-site residue. Position 278 (Asp-278) interacts with Zn(2+).

The protein belongs to the metallo-dependent hydrolases superfamily. Adenosine and AMP deaminases family. Adenosine deaminase subfamily. The cofactor is Zn(2+).

It carries out the reaction adenosine + H2O + H(+) = inosine + NH4(+). The catalysed reaction is 2'-deoxyadenosine + H2O + H(+) = 2'-deoxyinosine + NH4(+). In terms of biological role, catalyzes the hydrolytic deamination of adenosine and 2-deoxyadenosine. The protein is Adenosine deaminase of Clostridium perfringens (strain ATCC 13124 / DSM 756 / JCM 1290 / NCIMB 6125 / NCTC 8237 / Type A).